The sequence spans 117 residues: Non-specific lipid-transfer protein (117 aa).

The signal sequence occupies residues 1 to 26 (MACSAMTKLALVVALCMVVSVPIAQA). Cystine bridges form between cysteine 29-cysteine 76, cysteine 39-cysteine 53, cysteine 54-cysteine 99, and cysteine 74-cysteine 113.

It belongs to the plant LTP family.

Its function is as follows. Plant non-specific lipid-transfer proteins transfer phospholipids as well as galactolipids across membranes. May play a role in wax or cutin deposition in the cell walls of expanding epidermal cells and certain secretory tissues. The chain is Non-specific lipid-transfer protein from Prunus avium (Cherry).